Here is a 449-residue protein sequence, read N- to C-terminus: MGKLFGTDGVRGIANRDLTPELAYQLGRIGAYVLNKDNNKRAKVAIGKDTRISGDLLESAMTAGFLSMGVDVISLGVLPTPAVAYLTRHLKADFGVVISASHNPAEYNGIKFFNREGYKLPDEVEEQIEAYILNNRDVDIRMEGKDVGTVTVDEKSIEEYTDFLKTTLDRDFKGLKIAVDAGNGAAYRSAPKLLKELGAEVILINDTPDGMNINKGCGSTNPEVIGALVKEVGADIGISFDGDADRLIAVDENGEVVDGDHIMAICGICLKKQGKLKNDVIVGTVMSNIGLEIAMKEYGCNVVKTKVGDRYVLEEMVQGGYCLGGEQSGHVIFLDYNTTGDGLLTAIQLIATMKAENKKLSELAKVMTSYPQVLVNAKVKNENKEVYQNDAIIMQSITAIENKLAGEGRVLIRPSGTEPLVRVMLEGKNQEELNVLATDLAKLIEQRLN.

Residue Ser-101 is the Phosphoserine intermediate of the active site. Ser-101, Asp-241, Asp-243, and Asp-245 together coordinate Mg(2+). Ser-101 carries the post-translational modification Phosphoserine.

Belongs to the phosphohexose mutase family. The cofactor is Mg(2+). Post-translationally, activated by phosphorylation.

The enzyme catalyses alpha-D-glucosamine 1-phosphate = D-glucosamine 6-phosphate. Functionally, catalyzes the conversion of glucosamine-6-phosphate to glucosamine-1-phosphate. This is Phosphoglucosamine mutase from Alkaliphilus oremlandii (strain OhILAs) (Clostridium oremlandii (strain OhILAs)).